The chain runs to 222 residues: Flagellin B5 (222 aa).

A propeptide spanning residues 1–4 (MRRG) is cleaved from the precursor.

Belongs to the archaeal flagellin family.

It localises to the archaeal flagellum. Flagellin is the subunit protein which polymerizes to form the filaments of archaeal flagella. This Pyrococcus abyssi (strain GE5 / Orsay) protein is Flagellin B5 (flaB5).